Reading from the N-terminus, the 75-residue chain is MGIKVKFPFEYTRFEKARIIGARALQIAMGAPVLIETDKTEPLEIALEEFNRGVIPITVRRRRNEFVWLERYDLF.

Belongs to the archaeal Rpo6/eukaryotic RPB6 RNA polymerase subunit family. In terms of assembly, part of the RNA polymerase complex.

The protein resides in the cytoplasm. The catalysed reaction is RNA(n) + a ribonucleoside 5'-triphosphate = RNA(n+1) + diphosphate. Functionally, DNA-dependent RNA polymerase (RNAP) catalyzes the transcription of DNA into RNA using the four ribonucleoside triphosphates as substrates. This Archaeoglobus fulgidus (strain ATCC 49558 / DSM 4304 / JCM 9628 / NBRC 100126 / VC-16) protein is DNA-directed RNA polymerase subunit Rpo6.